The sequence spans 193 residues: Fibrillarin-like rRNA/tRNA 2'-O-methyltransferase (193 aa).

S-adenosyl-L-methionine is bound by residues 82 to 83 (TT), 100 to 101 (EF), 125 to 126 (DA), and 145 to 148 (DVAQ).

Belongs to the methyltransferase superfamily. Fibrillarin family. As to quaternary structure, interacts with nop5. Component of box C/D small ribonucleoprotein (sRNP) particles that contain rpl7ae, FlpA and nop5, plus a guide RNA.

In terms of biological role, involved in pre-rRNA and tRNA processing. Utilizes the methyl donor S-adenosyl-L-methionine to catalyze the site-specific 2'-hydroxyl methylation of ribose moieties in rRNA and tRNA. Site specificity is provided by a guide RNA that base pairs with the substrate. Methylation occurs at a characteristic distance from the sequence involved in base pairing with the guide RNA. This is Fibrillarin-like rRNA/tRNA 2'-O-methyltransferase from Methanosarcina mazei (Methanosarcina frisia).